The sequence spans 1486 residues: Chromosome partition protein MukB (1486 aa).

Position 34–41 (G34–S41) interacts with ATP. Coiled-coil stretches lie at residues L326–Q418, L444–Q480, and R509–V603. Residues P666 to R783 form a flexible hinge region. Coiled-coil stretches lie at residues E835–E923, E977–A1115, and V1209–S1266.

The protein belongs to the SMC family. MukB subfamily. As to quaternary structure, homodimerization via its hinge domain. Binds to DNA via its C-terminal region. Interacts, and probably forms a ternary complex, with MukE and MukF via its C-terminal region. The complex formation is stimulated by calcium or magnesium. Interacts with tubulin-related protein FtsZ.

The protein localises to the cytoplasm. It localises to the nucleoid. Plays a central role in chromosome condensation, segregation and cell cycle progression. Functions as a homodimer, which is essential for chromosome partition. Involved in negative DNA supercoiling in vivo, and by this means organize and compact chromosomes. May achieve or facilitate chromosome segregation by condensation DNA from both sides of a centrally located replisome during cell division. This chain is Chromosome partition protein MukB, found in Shigella flexneri serotype 5b (strain 8401).